Here is a 100-residue protein sequence, read N- to C-terminus: Urease subunit gamma (100 aa).

It belongs to the urease gamma subunit family. As to quaternary structure, heterotrimer of UreA (gamma), UreB (beta) and UreC (alpha) subunits. Three heterotrimers associate to form the active enzyme.

It is found in the cytoplasm. It carries out the reaction urea + 2 H2O + H(+) = hydrogencarbonate + 2 NH4(+). The protein operates within nitrogen metabolism; urea degradation; CO(2) and NH(3) from urea (urease route): step 1/1. This chain is Urease subunit gamma, found in Mycolicibacterium gilvum (strain PYR-GCK) (Mycobacterium gilvum (strain PYR-GCK)).